We begin with the raw amino-acid sequence, 91 residues long: MSNTDSVRVKLLFFAKSRELAGVSGTDDFLVPHAEIKCSELLDLICNRYNLSIIRNNVILAHNEQYCADLSETIRIRNGDELAVIPPISGG.

The residue at position 91 (Gly91) is a 1-thioglycine; alternate. The residue at position 91 (Gly91) is a Glycyl adenylate; alternate.

It belongs to the MoaD family. MOCS2A subfamily. Heterotetramer; composed of 2 small (MOCS2A) and 2 large (MOCS2B) subunits. In terms of processing, C-terminal thiocarboxylation occurs in 2 steps, it is first acyl-adenylated (-COAMP) via the hesA/moeB/thiF part of MOCS3, then thiocarboxylated (-COSH) via the rhodanese domain of MOCS3.

The protein resides in the cytoplasm. It functions in the pathway cofactor biosynthesis; molybdopterin biosynthesis. Functionally, acts as a sulfur carrier required for molybdopterin biosynthesis. Component of the molybdopterin synthase complex that catalyzes the conversion of precursor Z into molybdopterin by mediating the incorporation of 2 sulfur atoms into precursor Z to generate a dithiolene group. In the complex, serves as sulfur donor by being thiocarboxylated (-COSH) at its C-terminus by MOCS3. After interaction with MOCS2B, the sulfur is then transferred to precursor Z to form molybdopterin. The protein is Molybdopterin synthase sulfur carrier subunit of Anopheles gambiae (African malaria mosquito).